Consider the following 301-residue polypeptide: D-alanine--D-alanine ligase (301 aa).

The region spanning 101–296 (KLMWRAAGLA…YPTLVRRVLE (196 aa)) is the ATP-grasp domain. 127–182 (EEELGLPLFVKPAREGSSIGVTKVKERGALKAAYEEAARHDPLVIAEKGVMGGEYT) provides a ligand contact to ATP. Mg(2+)-binding residues include aspartate 250, glutamate 263, and asparagine 265.

This sequence belongs to the D-alanine--D-alanine ligase family. Mg(2+) is required as a cofactor. It depends on Mn(2+) as a cofactor.

Its subcellular location is the cytoplasm. It carries out the reaction 2 D-alanine + ATP = D-alanyl-D-alanine + ADP + phosphate + H(+). Its pathway is cell wall biogenesis; peptidoglycan biosynthesis. Cell wall formation. In Dechloromonas aromatica (strain RCB), this protein is D-alanine--D-alanine ligase.